We begin with the raw amino-acid sequence, 206 residues long: Orotate phosphoribosyltransferase (206 aa).

5-phospho-alpha-D-ribose 1-diphosphate-binding positions include Arg-114, Lys-115, Lys-118, His-120, and 141-149 (EDVVTTGQS). The orotate site is built by Thr-145 and Arg-173.

The protein belongs to the purine/pyrimidine phosphoribosyltransferase family. PyrE subfamily. Homodimer. Mg(2+) is required as a cofactor.

The enzyme catalyses orotidine 5'-phosphate + diphosphate = orotate + 5-phospho-alpha-D-ribose 1-diphosphate. It functions in the pathway pyrimidine metabolism; UMP biosynthesis via de novo pathway; UMP from orotate: step 1/2. Catalyzes the transfer of a ribosyl phosphate group from 5-phosphoribose 1-diphosphate to orotate, leading to the formation of orotidine monophosphate (OMP). The sequence is that of Orotate phosphoribosyltransferase from Nostoc sp. (strain PCC 7120 / SAG 25.82 / UTEX 2576).